A 729-amino-acid chain; its full sequence is Rho GTPase-activating protein 28 (729 aa).

The tract at residues 1–78 (MEVEDSGGVV…ASVDSSASME (78 aa)) is disordered. Basic residues predominate over residues 37–49 (LSRKSIPRCRRIN). The segment covering 63–76 (SRSNSQASVDSSAS) has biased composition (low complexity). Phosphoserine is present on serine 70. Threonine 164 is subject to Phosphothreonine. The segment at 180–234 (FGVSESPPSDSCEHATQLDGTKEEKDLPGVTKTSRPLPDDASLSSTTLSNGAQDE) is disordered. Polar residues predominate over residues 221–231 (SLSSTTLSNGA). Residues 384–581 (VPLTVLLDND…LMLKYQKILW (198 aa)) form the Rho-GAP domain.

Functionally, GTPase activator for the Rho-type GTPases by converting them to an inactive GDP-bound state. This chain is Rho GTPase-activating protein 28 (Arhgap28), found in Mus musculus (Mouse).